Here is a 100-residue protein sequence, read N- to C-terminus: Urease subunit gamma (100 aa).

It belongs to the urease gamma subunit family. As to quaternary structure, heterotrimer of UreA (gamma), UreB (beta) and UreC (alpha) subunits. Three heterotrimers associate to form the active enzyme.

The protein localises to the cytoplasm. The catalysed reaction is urea + 2 H2O + H(+) = hydrogencarbonate + 2 NH4(+). It functions in the pathway nitrogen metabolism; urea degradation; CO(2) and NH(3) from urea (urease route): step 1/1. This chain is Urease subunit gamma, found in Jannaschia sp. (strain CCS1).